Here is a 132-residue protein sequence, read N- to C-terminus: Large ribosomal subunit protein uL22c (132 aa).

The protein belongs to the universal ribosomal protein uL22 family. In terms of assembly, part of the 50S ribosomal subunit.

The protein localises to the plastid. Its subcellular location is the chloroplast. Its function is as follows. This protein binds specifically to 23S rRNA. Functionally, the globular domain of the protein is located near the polypeptide exit tunnel on the outside of the subunit, while an extended beta-hairpin is found that lines the wall of the exit tunnel in the center of the 70S ribosome. The sequence is that of Large ribosomal subunit protein uL22c (rpl22) from Staurastrum punctulatum (Green alga).